Consider the following 203-residue polypeptide: Bone marrow stromal antigen 2 (203 aa).

Residues 1–26 (MAPTFYHYHPLPMDQKEPGCGIRWRC) lie on the Cytoplasmic side of the membrane. The chain crosses the membrane as a helical; Signal-anchor for type II membrane protein span at residues 27-47 (LAAASVLILVALVIPLIIFAV). At 48-183 (KANSEACRDG…EASITSKQNS (136 aa)) the chain is on the extracellular side. N-linked (GlcNAc...) asparagine glycans are attached at residues Asn66 and Asn93. A coiled-coil region spans residues 66–178 (NTTRLLQRQL…LRTAEEASIT (113 aa)). Ser183 is lipidated: GPI-anchor amidated serine. Residues 184-203 (AGSMAVSSLLVLAVPLFLLF) constitute a propeptide, removed in mature form.

As to quaternary structure, parallel homodimer; disulfide-linked. May form homotetramers under reducing conditions. Isoform 1 and isoform 2 form homodimers and also heterodimers with each other. Dimerization is essential for its antiviral activity. Interacts (via cytoplasmic domain) with ARHGAP44. Interacts with MMP14 (via C-terminal cytoplasmic tail). Interacts with LILRA4/ILT7. Interacts with RNF115. The GPI anchor is essential for its antiviral activity.

Its subcellular location is the golgi apparatus. It is found in the trans-Golgi network. The protein resides in the cell membrane. The protein localises to the late endosome. It localises to the membrane raft. Its subcellular location is the cytoplasm. It is found in the apical cell membrane. IFN-induced antiviral host restriction factor which efficiently blocks the release of diverse mammalian enveloped viruses by directly tethering nascent virions to the membranes of infected cells. Acts as a direct physical tether, holding virions to the cell membrane and linking virions to each other. The tethered virions can be internalized by endocytosis and subsequently degraded or they can remain on the cell surface. In either case, their spread as cell-free virions is restricted. Its target viruses belong to diverse families, including retroviridae: human immunodeficiency virus type 1 (HIV-1), mouse mammary tumor virus (MMTV) and murine leukemia virus (MLV), filoviridae: ebola virus (EBOV), arenaviridae: lassa virus (LASV), and rhabdoviridae: vesicular stomatitis virus (VSV). Can inhibit cell surface proteolytic activity of MMP14 causing decreased activation of MMP15 which results in inhibition of cell growth and migration. Can stimulate signaling by LILRA4/ILT7 and consequently provide negative feedback to the production of IFN by plasmacytoid dendritic cells in response to viral infection. Plays a role in the organization of the subapical actin cytoskeleton in polarized epithelial cells. The chain is Bone marrow stromal antigen 2 (Bst2) from Cricetulus griseus (Chinese hamster).